Here is a 539-residue protein sequence, read N- to C-terminus: Monocarboxylate transporter 8 (539 aa).

The disordered stretch occupies residues 1–92 (MALQSQASEE…VETRGTARGF (92 aa)). A2 carries the post-translational modification N-acetylalanine. Residues 2–96 (ALQSQASEEA…GTARGFQPPE (95 aa)) lie on the Cytoplasmic side of the membrane. Residues 31-41 (PESEPEPEPEP) are compositionally biased toward acidic residues. Positions 42-64 (EPVPVPPPEPQPEPQPLPDPAPL) are enriched in pro residues. A helical transmembrane segment spans residues 97 to 117 (GGFGWVVVFAATWCNGSIFGI). At 118–143 (HNSVGILYSMLLEEEKEKNRQVEFQA) the chain is on the extracellular side. The helical transmembrane segment at 144-164 (AWVGALAMGMIFFCSPIVSIF) threads the bilayer. At 165-171 (TDRLGCR) the chain is on the cytoplasmic side. Residues 172 to 192 (ITATAGAAVAFIGLHTSSFTS) traverse the membrane as a helical segment. Over 193–200 (SLSLRYFT) the chain is Extracellular. Residues 201–221 (YGILFGCGCSFAFQPSLVILG) form a helical membrane-spanning segment. The Cytoplasmic portion of the chain corresponds to 222 to 229 (HYFQRRLG). A helical membrane pass occupies residues 230–250 (LANGVVSAGSSIFSMSFPFLI). Topologically, residues 251-258 (RMLGDKIK) are extracellular. Residues 259-279 (LAQTFQVLSTFMFVLMLLSLT) form a helical membrane-spanning segment. The Cytoplasmic portion of the chain corresponds to 280-322 (YRPLLPSSQDTPSKRGVRTLHQRFLAQLRKYFNMRVFRQRTYR). Residues 323–343 (IWAFGIAAAALGYFVPYVHLM) traverse the membrane as a helical segment. The Extracellular portion of the chain corresponds to 344–356 (KYVEEEFSEIKET). Residues 357-377 (WVLLVCIGATSGLGRLVSGHI) traverse the membrane as a helical segment. Residues 378-386 (SDSIPGLKK) are Cytoplasmic-facing. The helical transmembrane segment at 387-407 (IYLQVLSFLLLGLMSMMIPLC) threads the bilayer. The Extracellular portion of the chain corresponds to 408–409 (RD). Residues 410–430 (FGGLIVVCLFLGLCDGFFITI) traverse the membrane as a helical segment. At 431 to 447 (MAPIAFELVGPMQASQA) the chain is on the cytoplasmic side. Residues 448–468 (IGYLLGMMALPMIAGPPIAGL) traverse the membrane as a helical segment. Topologically, residues 469 to 477 (LRNCFGDYH) are extracellular. A helical membrane pass occupies residues 478-498 (VAFYFAGVPPIIGAVILFFVP). Topologically, residues 499-539 (LMHQRMFKKEQRDSSKDKMLAPDPDPNGELLPGSPNPEEPI) are cytoplasmic. Positions 508–518 (EQRDSSKDKML) are enriched in basic and acidic residues. The disordered stretch occupies residues 508–539 (EQRDSSKDKMLAPDPDPNGELLPGSPNPEEPI).

This sequence belongs to the major facilitator superfamily. Monocarboxylate porter (TC 2.A.1.13) family. As to quaternary structure, monomer. Homodimer. Homooligomer. As to expression, highly expressed in liver and heart. In adult brain tissue expression is largely confined to endothelial cells of the blood-brain barrier (at protein level).

It localises to the cell membrane. The protein resides in the apical cell membrane. The enzyme catalyses 3,3',5-triiodo-L-thyronine(out) = 3,3',5-triiodo-L-thyronine(in). It catalyses the reaction L-thyroxine(out) = L-thyroxine(in). The catalysed reaction is 3,3',5'-triiodo-L-thyronine(out) = 3,3',5'-triiodo-L-thyronine(in). It carries out the reaction 3,3'-diiodo-L-thyronine(out) = 3,3'-diiodo-L-thyronine(in). Functionally, specific thyroid hormone transmembrane transporter, that mediates both uptake and efflux of thyroid hormones across the cell membrane independently of pH or a Na(+) gradient. Major substrates are the iodothyronines T3 and T4 and to a lesser extent rT3 and 3,3-diiodothyronine (3,3'-T2). Acts as an important mediator of thyroid hormone transport, especially T3, through the blood-brain barrier. The chain is Monocarboxylate transporter 8 (SLC16A2) from Homo sapiens (Human).